The primary structure comprises 231 residues: Cytidylate kinase (231 aa).

16–24 serves as a coordination point for ATP; it reads GPAASGKST. A disordered region spans residues 176 to 205; that stretch reads PDLDSLEQEITKRDRDDAEREHAPLKKHPE. Residues 184 to 205 show a composition bias toward basic and acidic residues; sequence EITKRDRDDAEREHAPLKKHPE.

The protein belongs to the cytidylate kinase family. Type 1 subfamily.

The protein localises to the cytoplasm. It carries out the reaction CMP + ATP = CDP + ADP. It catalyses the reaction dCMP + ATP = dCDP + ADP. The sequence is that of Cytidylate kinase from Pelodictyon phaeoclathratiforme (strain DSM 5477 / BU-1).